Consider the following 160-residue polypeptide: Fimbrial protein (160 aa).

Positions 1-7 (MKSLQKG) are cleaved as a propeptide — leader sequence. F8 is modified (N-methylphenylalanine). Residues 8-28 (FTLIELMIVVAIIGILAAFAI) form a helical membrane-spanning segment.

This sequence belongs to the N-Me-Phe pilin family. As to quaternary structure, the pili are polar flexible filaments of about 5.4 nanometers diameter and 2.5 micrometers average length; they consist of only a single polypeptide chain arranged in a helical configuration of five subunits per turn in the assembled pilus.

Its subcellular location is the fimbrium. The protein resides in the membrane. This Dichelobacter nodosus (Bacteroides nodosus) protein is Fimbrial protein (fimA).